The primary structure comprises 588 residues: Aspartate--tRNA ligase (588 aa).

Glu174 contacts L-aspartate. The aspartate stretch occupies residues 198–201 (QLFK). Arg220 provides a ligand contact to L-aspartate. ATP is bound by residues 220 to 222 (RDE) and Gln229. Residue His448 coordinates L-aspartate. Glu482 contacts ATP. Arg489 contributes to the L-aspartate binding site. 534-537 (GIDR) provides a ligand contact to ATP.

Belongs to the class-II aminoacyl-tRNA synthetase family. Type 1 subfamily. As to quaternary structure, homodimer.

It is found in the cytoplasm. The enzyme catalyses tRNA(Asp) + L-aspartate + ATP = L-aspartyl-tRNA(Asp) + AMP + diphosphate. Catalyzes the attachment of L-aspartate to tRNA(Asp) in a two-step reaction: L-aspartate is first activated by ATP to form Asp-AMP and then transferred to the acceptor end of tRNA(Asp). The polypeptide is Aspartate--tRNA ligase (Xanthomonas oryzae pv. oryzae (strain MAFF 311018)).